A 128-amino-acid chain; its full sequence is Cionin (128 aa).

The N-terminal stretch at 1–22 is a signal peptide; sequence MGSNIVIYFSIIVIVTLNVNGV. The propeptide occupies 23–108; that stretch reads PASDLFKSVS…NQGHMQRMDR (86 aa). Sulfotyrosine occurs at positions 110 and 111. Phe-116 carries the phenylalanine amide modification. A propeptide spanning residues 120-128 is cleaved from the precursor; the sequence is AIEDVDYEY.

Belongs to the gastrin/cholecystokinin family. Expressed in both the gut and the neural ganglion.

The protein localises to the secreted. This Ciona intestinalis (Transparent sea squirt) protein is Cionin.